The sequence spans 567 residues: Proline--tRNA ligase (567 aa).

This sequence belongs to the class-II aminoacyl-tRNA synthetase family. ProS type 1 subfamily. As to quaternary structure, homodimer.

It is found in the cytoplasm. The enzyme catalyses tRNA(Pro) + L-proline + ATP = L-prolyl-tRNA(Pro) + AMP + diphosphate. In terms of biological role, catalyzes the attachment of proline to tRNA(Pro) in a two-step reaction: proline is first activated by ATP to form Pro-AMP and then transferred to the acceptor end of tRNA(Pro). As ProRS can inadvertently accommodate and process non-cognate amino acids such as alanine and cysteine, to avoid such errors it has two additional distinct editing activities against alanine. One activity is designated as 'pretransfer' editing and involves the tRNA(Pro)-independent hydrolysis of activated Ala-AMP. The other activity is designated 'posttransfer' editing and involves deacylation of mischarged Ala-tRNA(Pro). The misacylated Cys-tRNA(Pro) is not edited by ProRS. The chain is Proline--tRNA ligase from Staphylococcus aureus (strain Mu3 / ATCC 700698).